A 157-amino-acid polypeptide reads, in one-letter code: Mitochondrial inner membrane protease subunit 1 (157 aa).

Active-site residues include serine 35 and lysine 80.

It belongs to the peptidase S26 family. IMP1 subfamily. In terms of assembly, heterodimer of 2 subunits, imp1 and imp2.

The protein resides in the mitochondrion inner membrane. Catalyzes the removal of transit peptides required for the targeting of proteins from the mitochondrial matrix, across the inner membrane, into the inter-membrane space. This Schizosaccharomyces pombe (strain 972 / ATCC 24843) (Fission yeast) protein is Mitochondrial inner membrane protease subunit 1 (imp1).